The following is a 374-amino-acid chain: Chaperone protein DnaJ (374 aa).

The J domain maps to 4-69 (DFYETLCVSR…QKRAAYDRFG (66 aa)). The segment at 131–210 (GKTAQIRVPT…CSGQGRLTEE (80 aa)) adopts a CR-type zinc-finger fold. Positions 144, 147, 161, 164, 184, 187, 198, and 201 each coordinate Zn(2+). CXXCXGXG motif repeat units lie at residues 144-151 (CDECAGSG), 161-168 (CPMCHGAG), 184-191 (CPQCQGRG), and 198-205 (CRKCSGQG).

The protein belongs to the DnaJ family. As to quaternary structure, homodimer. Zn(2+) serves as cofactor.

It localises to the cytoplasm. Its function is as follows. Participates actively in the response to hyperosmotic and heat shock by preventing the aggregation of stress-denatured proteins and by disaggregating proteins, also in an autonomous, DnaK-independent fashion. Unfolded proteins bind initially to DnaJ; upon interaction with the DnaJ-bound protein, DnaK hydrolyzes its bound ATP, resulting in the formation of a stable complex. GrpE releases ADP from DnaK; ATP binding to DnaK triggers the release of the substrate protein, thus completing the reaction cycle. Several rounds of ATP-dependent interactions between DnaJ, DnaK and GrpE are required for fully efficient folding. Also involved, together with DnaK and GrpE, in the DNA replication of plasmids through activation of initiation proteins. The sequence is that of Chaperone protein DnaJ from Chelativorans sp. (strain BNC1).